The following is a 159-amino-acid chain: Cytochrome c-type biogenesis protein CcmE (159 aa).

Residues Met1–Arg8 are Cytoplasmic-facing. Residues Leu9–Ala29 form a helical; Signal-anchor for type II membrane protein membrane-spanning segment. Residues Leu30–Pro159 are Periplasmic-facing. 2 residues coordinate heme: His130 and Tyr134. The interval His130 to Pro159 is disordered.

Belongs to the CcmE/CycJ family.

Its subcellular location is the cell inner membrane. Heme chaperone required for the biogenesis of c-type cytochromes. Transiently binds heme delivered by CcmC and transfers the heme to apo-cytochromes in a process facilitated by CcmF and CcmH. This is Cytochrome c-type biogenesis protein CcmE from Cronobacter sakazakii (strain ATCC BAA-894) (Enterobacter sakazakii).